Here is a 577-residue protein sequence, read N- to C-terminus: Arginine--tRNA ligase (577 aa).

A 'HIGH' region motif is present at residues 122–132 (PNVAKEMHVGH).

The protein belongs to the class-I aminoacyl-tRNA synthetase family. Monomer.

The protein resides in the cytoplasm. It carries out the reaction tRNA(Arg) + L-arginine + ATP = L-arginyl-tRNA(Arg) + AMP + diphosphate. The protein is Arginine--tRNA ligase of Escherichia coli (strain K12 / MC4100 / BW2952).